The primary structure comprises 90 residues: uncharacterized protein (90 aa).

This is an uncharacterized protein from Bos taurus (Bovine).